Consider the following 298-residue polypeptide: S-adenosylmethionine-dependent nucleotide dehydratase (298 aa).

The region spanning 8-235 (ANKELVVNWH…QRFGEIIYAE (228 aa)) is the Radical SAM core domain. C22, C26, and C29 together coordinate [4Fe-4S] cluster.

The protein belongs to the radical SAM superfamily. Viperin family. [4Fe-4S] cluster serves as cofactor.

It catalyses the reaction CTP + AH2 + S-adenosyl-L-methionine = 3'-deoxy-3',4'-didehydro-CTP + 5'-deoxyadenosine + L-methionine + A + H2O + H(+). It carries out the reaction UTP + AH2 + S-adenosyl-L-methionine = 3'-deoxy-3',4'-didehydro-UTP + 5'-deoxyadenosine + L-methionine + A + H2O + H(+). Expression of pVip8 in E.coli (strain MG1655) confers resistance to phages lambda, P1, SECphi8 and T7. Prevents culture collapse upon infection with T7. Catalyzes the conversion of cytidine triphosphate (CTP) to 3'-deoxy-3',4'-didehydro-CTP (ddhCTP) and uridine triphosphate (UTP) to 3'-deoxy-3',4'-didehydro-UTP (ddhUTP), probably via a SAM-dependent radical mechanism. The modified nucleotides repress transcription from T7 RNA polymerase-directed genes (possibly by acting as chain terminators), strongly suggesting these nucleotides block viral polymerase transcription. The sequence is that of S-adenosylmethionine-dependent nucleotide dehydratase from Psychrobacter lutiphocae (strain DSM 21542 / CCUG 56590 / IMMIB L-1110).